The primary structure comprises 153 residues: Arginine repressor (153 aa).

This sequence belongs to the ArgR family.

The protein localises to the cytoplasm. The protein operates within amino-acid biosynthesis; L-arginine biosynthesis [regulation]. In terms of biological role, regulates arginine biosynthesis genes. The polypeptide is Arginine repressor (Actinobacillus pleuropneumoniae serotype 5b (strain L20)).